We begin with the raw amino-acid sequence, 417 residues long: MDKLVIEGGVPLTGTINVSGSKNAALPILMASILAEEPVTYTNVPRLRDIHTTNKLLSILGCPAEFEGDTVSVRPCDLKPEAPYDLVKTMRASVLCLGPLLARLGEARVALPGGCAIGARPVDLHLTALEKMGARFELEEGYIIGRCRKLKGAHIYFDFPTVGGTENLLMAATLAEGETILENAAREPEVVDLARFLIACGAKIEGHGTSVIRVQGVPRLHGCEYAIMPDRIEAGTFLVAAGITGGELLLTGCPWEELDAVIVKLNAMGMHIEKTSEGVLAKRRNGGLRGTDVTTQPFPGFPTDMQAQVMSLMCLAEGTSVVQENIFENRFMHVLELVRMGADIRISGRSAVVRGVKRLTGAPVMASDLRASASLVLAGLAARGTTHVQRIYHLDRGYERIELKLNAVGARIRREAE.

22–23 lines the phosphoenolpyruvate pocket; sequence KN. Arg-91 lines the UDP-N-acetyl-alpha-D-glucosamine pocket. The active-site Proton donor is Cys-115. 2-(S-cysteinyl)pyruvic acid O-phosphothioketal is present on Cys-115. Residues 120–124, Asp-304, and Ile-326 each bind UDP-N-acetyl-alpha-D-glucosamine; that span reads RPVDL.

It belongs to the EPSP synthase family. MurA subfamily.

The protein resides in the cytoplasm. The enzyme catalyses phosphoenolpyruvate + UDP-N-acetyl-alpha-D-glucosamine = UDP-N-acetyl-3-O-(1-carboxyvinyl)-alpha-D-glucosamine + phosphate. It participates in cell wall biogenesis; peptidoglycan biosynthesis. In terms of biological role, cell wall formation. Adds enolpyruvyl to UDP-N-acetylglucosamine. This chain is UDP-N-acetylglucosamine 1-carboxyvinyltransferase, found in Nitratidesulfovibrio vulgaris (strain ATCC 29579 / DSM 644 / CCUG 34227 / NCIMB 8303 / VKM B-1760 / Hildenborough) (Desulfovibrio vulgaris).